We begin with the raw amino-acid sequence, 461 residues long: Chromosomal replication initiator protein DnaA (461 aa).

The tract at residues 1–83 is domain I, interacts with DnaA modulators; sequence MTASLWQQCL…LHFAVGRRPT (83 aa). Residues 83 to 124 are domain II; that stretch reads TAATVQMNTAAAPVADVRIGPAITVPSWTSKQDAMPEINHKS. The interval 125–341 is domain III, AAA+ region; that stretch reads NINETYTFEN…GALNRVIANA (217 aa). Positions 169, 171, 172, and 173 each coordinate ATP. The interval 342-461 is domain IV, binds dsDNA; that stretch reads RFTGKPINID…YSNLIRTLSS (120 aa).

It belongs to the DnaA family. In terms of assembly, oligomerizes as a right-handed, spiral filament on DNA at oriC.

It is found in the cytoplasm. Plays an essential role in the initiation and regulation of chromosomal replication. ATP-DnaA binds to the origin of replication (oriC) to initiate formation of the DNA replication initiation complex once per cell cycle. Binds the DnaA box (a 9 base pair repeat at the origin) and separates the double-stranded (ds)DNA. Forms a right-handed helical filament on oriC DNA; dsDNA binds to the exterior of the filament while single-stranded (ss)DNA is stabiized in the filament's interior. The ATP-DnaA-oriC complex binds and stabilizes one strand of the AT-rich DNA unwinding element (DUE), permitting loading of DNA polymerase. After initiation quickly degrades to an ADP-DnaA complex that is not apt for DNA replication. Binds acidic phospholipids. The chain is Chromosomal replication initiator protein DnaA from Tolumonas auensis (strain DSM 9187 / NBRC 110442 / TA 4).